The chain runs to 197 residues: Probable GTP-binding protein EngB (197 aa).

Positions 2–186 (KVKEVIFAGR…KRDLKQYLLS (185 aa)) constitute an EngB-type G domain. GTP-binding positions include 10–17 (GRSNVGKS), 35–39 (GTTIR), 52–55 (DLPG), 132–135 (NKMD), and 166–168 (VCA). Mg(2+) contacts are provided by S17 and T37.

The protein belongs to the TRAFAC class TrmE-Era-EngA-EngB-Septin-like GTPase superfamily. EngB GTPase family. It depends on Mg(2+) as a cofactor.

In terms of biological role, necessary for normal cell division and for the maintenance of normal septation. The protein is Probable GTP-binding protein EngB of Archaeoglobus fulgidus (strain ATCC 49558 / DSM 4304 / JCM 9628 / NBRC 100126 / VC-16).